Consider the following 320-residue polypeptide: MNKFITLFVLLASVSVAMSATCLTCVKEGAVCDATANICEEGTVCIKPNSTAANTICFVLPTLNEDCSGPLACADSYYCNTTSKICVEAYYLGVGESCSSENQCSTSLVCTGGKCVNEVYPLCGASNSRVGCKAGEGCAFNGTALVCSPFIANGAACNTSTSGLCHPVSSCSNGVCTAPLTGALNSNCTSNTDCNIANGLYCSSGKCTAVPEALNNCTTTPTVDNCLGYSACMCPSNDDTAKTGSCKDTIEYSDVTSDAYNKYDSCVVSCPAVTIVQKQSCLSKCTNPLAGAANNVCSSATTIAFNAFVVFAIVLSVLLF.

Positions 1-19 (MNKFITLFVLLASVSVAMS) are cleaved as a signal peptide. 9 disulfides stabilise this stretch: cysteine 39–cysteine 57, cysteine 67–cysteine 79, cysteine 73–cysteine 86, cysteine 98–cysteine 110, cysteine 104–cysteine 115, cysteine 123–cysteine 138, cysteine 132–cysteine 147, cysteine 157–cysteine 171, and cysteine 165–cysteine 176. N-linked (GlcNAc...) asparagine glycosylation occurs at asparagine 49. Asparagine 80 carries N-linked (GlcNAc...) asparagine glycosylation. N-linked (GlcNAc...) asparagine glycosylation is found at asparagine 141 and asparagine 158. An N-linked (GlcNAc...) asparagine glycan is attached at asparagine 187. 2 cysteine pairs are disulfide-bonded: cysteine 188–cysteine 202 and cysteine 194–cysteine 207. Asparagine 216 carries N-linked (GlcNAc...) asparagine glycosylation. 4 disulfides stabilise this stretch: cysteine 226–cysteine 246, cysteine 232–cysteine 234, cysteine 266–cysteine 285, and cysteine 270–cysteine 281. The GPI-like-anchor amidated serine moiety is linked to residue serine 298. Residues 299–320 (SATTIAFNAFVVFAIVLSVLLF) constitute a propeptide, removed in mature form.

In terms of processing, contains 18 disulfide bonds. Post-translationally, the GPI-like-anchor contains a phosphoceramide group, rather than a phosphatidyl group.

Its subcellular location is the cell membrane. Cell-cell adhesion during development. The sequence is that of Cell-cell adhesion glycoprotein 64 from Heterostelium pallidum (Cellular slime mold).